A 456-amino-acid chain; its full sequence is MSYPQGYLYQPPGSLALYSCPAYGASALAAPRSEELARSSSGSAFSPYPGSAAFTAQAATGFSSPLQYSSDPAGFPSYMGSPYDAHTTGMTGALSYHPYGSAAYPYQLNDPAYRKNATRDATATLKAWLQEHRKNPYPTKGEKIMLAIITKMTLTQVSTWFANARRRLKKENKMTWAPRNKSEDEDDDEGDGERVKEEQSEKAQDCNETSAEDEGISLHVDSLTDHSCSADSDGEKLPCRATDHLCESGSESKEKYDDDEDEEEGDEEDRVLPVKPATSSPLTGVEAPILNHQQDGSPRNSNKTSLDNGMSPSSQTPASKPKLWSLAEIATSDHKHSNLGSVLSSATSSAAHNPSYPSSSLLGRHIYYTSPFYSNYTNYGNFNALQSQGILRYSSAAVTANEGLNQTVLSTSSMHKHTSDSVRTASNQLDQHYRPTNFESKKDPSEVCTVGVQPYP.

Residues 110-172 (DPAYRKNATR…NARRRLKKEN (63 aa)) constitute a DNA-binding region (homeobox; TALE-type). Disordered stretches follow at residues 172–214 (NKMT…AEDE), 246–320 (CESG…PASK), and 434–456 (RPTN…QPYP). 2 stretches are compositionally biased toward basic and acidic residues: residues 192–205 (GERV…KAQD) and 246–256 (CESGSESKEKY). Over residues 257–269 (DDDEDEEEGDEED) the composition is skewed to acidic residues. A compositionally biased stretch (polar residues) spans 291–318 (NHQQDGSPRNSNKTSLDNGMSPSSQTPA).

Belongs to the TALE/IRO homeobox family. In terms of tissue distribution, expressed in the neural plate in overlapping patterns with other irx members, which all share an anterior border of expression. Also expressed in the placodes. Broadly expressed in the tailbud rhombencephalon (hindbrain). Outside the nervous system and at tailbud stages, expressed in the developing otic vesicle, branchial arches, prospective heart region and pronephros.

It is found in the nucleus. Acts partially redundantly with other irx members in neural patterning. Required for formation of the posterior forebrain, midbrain, hindbrain, and to a lesser extent, spinal cord. Acts early in neural plate development to induce expression of some but not all proneural genes, and specify a neural precursor state. Also up-regulates repressors that prevent neuronal differentiation. Patterns the neuroectoderm in both the anterior/posterior and dorsal/ventral axes. Probably dispensable for pronephric kidney development. In Xenopus tropicalis (Western clawed frog), this protein is Iroquois-class homeodomain protein irx-2.